The chain runs to 362 residues: Aminomethyltransferase (362 aa).

The protein belongs to the GcvT family. The glycine cleavage system is composed of four proteins: P, T, L and H.

It catalyses the reaction N(6)-[(R)-S(8)-aminomethyldihydrolipoyl]-L-lysyl-[protein] + (6S)-5,6,7,8-tetrahydrofolate = N(6)-[(R)-dihydrolipoyl]-L-lysyl-[protein] + (6R)-5,10-methylene-5,6,7,8-tetrahydrofolate + NH4(+). Functionally, the glycine cleavage system catalyzes the degradation of glycine. This chain is Aminomethyltransferase, found in Colwellia psychrerythraea (strain 34H / ATCC BAA-681) (Vibrio psychroerythus).